The primary structure comprises 472 residues: Cysteine--tRNA ligase (472 aa).

Cysteine 28 is a Zn(2+) binding site. Residues 30 to 40 carry the 'HIGH' region motif; sequence PTVYDYTHIGH. The Zn(2+) site is built by cysteine 207, histidine 232, and glutamate 236. Residues 264–268 carry the 'KMSKS' region motif; it reads KMSKS. Lysine 267 is a binding site for ATP.

The protein belongs to the class-I aminoacyl-tRNA synthetase family. The cofactor is Zn(2+).

The protein localises to the cytoplasm. The catalysed reaction is tRNA(Cys) + L-cysteine + ATP = L-cysteinyl-tRNA(Cys) + AMP + diphosphate. This is Cysteine--tRNA ligase (cysS) from Aeropyrum pernix (strain ATCC 700893 / DSM 11879 / JCM 9820 / NBRC 100138 / K1).